Reading from the N-terminus, the 140-residue chain is Large ribosomal subunit protein uL11 (140 aa).

Belongs to the universal ribosomal protein uL11 family. In terms of assembly, part of the ribosomal stalk of the 50S ribosomal subunit. Interacts with L10 and the large rRNA to form the base of the stalk. L10 forms an elongated spine to which L12 dimers bind in a sequential fashion forming a multimeric L10(L12)X complex. One or more lysine residues are methylated.

In terms of biological role, forms part of the ribosomal stalk which helps the ribosome interact with GTP-bound translation factors. The sequence is that of Large ribosomal subunit protein uL11 from Symbiobacterium thermophilum (strain DSM 24528 / JCM 14929 / IAM 14863 / T).